Reading from the N-terminus, the 429-residue chain is Glutamate-1-semialdehyde 2,1-aminomutase (429 aa).

N6-(pyridoxal phosphate)lysine is present on Lys-264.

The protein belongs to the class-III pyridoxal-phosphate-dependent aminotransferase family. HemL subfamily. In terms of assembly, homodimer. Requires pyridoxal 5'-phosphate as cofactor.

The protein resides in the cytoplasm. It carries out the reaction (S)-4-amino-5-oxopentanoate = 5-aminolevulinate. It participates in porphyrin-containing compound metabolism; protoporphyrin-IX biosynthesis; 5-aminolevulinate from L-glutamyl-tRNA(Glu): step 2/2. The polypeptide is Glutamate-1-semialdehyde 2,1-aminomutase (Campylobacter curvus (strain 525.92)).